A 49-amino-acid polypeptide reads, in one-letter code: Large ribosomal subunit protein bL33 (49 aa).

Belongs to the bacterial ribosomal protein bL33 family.

The polypeptide is Large ribosomal subunit protein bL33 (Syntrophus aciditrophicus (strain SB)).